The sequence spans 264 residues: Pyridoxine 5'-phosphate synthase (264 aa).

Asparagine 28 lines the 3-amino-2-oxopropyl phosphate pocket. 30–31 is a 1-deoxy-D-xylulose 5-phosphate binding site; the sequence is DH. Arginine 39 is a 3-amino-2-oxopropyl phosphate binding site. Histidine 64 (proton acceptor) is an active-site residue. The 1-deoxy-D-xylulose 5-phosphate site is built by arginine 66 and histidine 71. Glutamate 91 (proton acceptor) is an active-site residue. Threonine 121 contributes to the 1-deoxy-D-xylulose 5-phosphate binding site. The Proton donor role is filled by histidine 217. 3-amino-2-oxopropyl phosphate is bound by residues glycine 218 and 239 to 240; that span reads GH.

Belongs to the PNP synthase family. In terms of assembly, homooctamer; tetramer of dimers.

The protein resides in the cytoplasm. The enzyme catalyses 3-amino-2-oxopropyl phosphate + 1-deoxy-D-xylulose 5-phosphate = pyridoxine 5'-phosphate + phosphate + 2 H2O + H(+). It functions in the pathway cofactor biosynthesis; pyridoxine 5'-phosphate biosynthesis; pyridoxine 5'-phosphate from D-erythrose 4-phosphate: step 5/5. In terms of biological role, catalyzes the complicated ring closure reaction between the two acyclic compounds 1-deoxy-D-xylulose-5-phosphate (DXP) and 3-amino-2-oxopropyl phosphate (1-amino-acetone-3-phosphate or AAP) to form pyridoxine 5'-phosphate (PNP) and inorganic phosphate. The chain is Pyridoxine 5'-phosphate synthase from Psychrobacter arcticus (strain DSM 17307 / VKM B-2377 / 273-4).